Here is a 94-residue protein sequence, read N- to C-terminus: DNA-directed RNA polymerase subunit omega (94 aa).

This sequence belongs to the RNA polymerase subunit omega family. The RNAP catalytic core consists of 2 alpha, 1 beta, 1 beta' and 1 omega subunit. When a sigma factor is associated with the core the holoenzyme is formed, which can initiate transcription.

It catalyses the reaction RNA(n) + a ribonucleoside 5'-triphosphate = RNA(n+1) + diphosphate. Functionally, promotes RNA polymerase assembly. Latches the N- and C-terminal regions of the beta' subunit thereby facilitating its interaction with the beta and alpha subunits. The chain is DNA-directed RNA polymerase subunit omega from Limosilactobacillus fermentum (strain NBRC 3956 / LMG 18251) (Lactobacillus fermentum).